The following is a 501-amino-acid chain: Vitamin D 25-hydroxylase (501 aa).

The N-terminal stretch at 1-26 is a signal peptide; it reads MWKLWRAEEGAAALGGALFLLLFALG. Position 250 (Ala250) interacts with substrate. Residue Cys448 coordinates heme.

It belongs to the cytochrome P450 family. Homodimer. The cofactor is heme.

It localises to the endoplasmic reticulum membrane. The protein localises to the microsome membrane. It carries out the reaction calciol + reduced [NADPH--hemoprotein reductase] + O2 = calcidiol + oxidized [NADPH--hemoprotein reductase] + H2O + H(+). It catalyses the reaction vitamin D2 + reduced [NADPH--hemoprotein reductase] + O2 = 25-hydroxyvitamin D2 + oxidized [NADPH--hemoprotein reductase] + H2O + H(+). The enzyme catalyses 1alpha-hydroxyvitamin D2 + reduced [NADPH--hemoprotein reductase] + O2 = 1alpha,25-dihydroxyvitamin D2 + oxidized [NADPH--hemoprotein reductase] + H2O + H(+). The catalysed reaction is alfacalcidol + reduced [NADPH--hemoprotein reductase] + O2 = calcitriol + oxidized [NADPH--hemoprotein reductase] + H2O + H(+). Its pathway is hormone biosynthesis; vitamin D biosynthesis. A cytochrome P450 monooxygenase involved in activation of vitamin D precursors. Catalyzes hydroxylation at C-25 of both forms of vitamin D, vitamin D(2) and D(3) (calciol). Can metabolize vitamin D analogs/prodrugs 1alpha-hydroxyvitamin D(2) (doxercalciferol) and 1alpha-hydroxyvitamin D(3) (alfacalcidol) forming 25-hydroxy derivatives. Mechanistically, uses molecular oxygen inserting one oxygen atom into a substrate, and reducing the second into a water molecule, with two electrons provided by NADPH via cytochrome P450 reductase (CPR; NADPH-ferrihemoprotein reductase). The sequence is that of Vitamin D 25-hydroxylase (CYP2R1) from Homo sapiens (Human).